The chain runs to 61 residues: Metallothionein-1L (61 aa).

The interval 1–29 is beta; it reads MDPNCSCATGGSCSCASSCKCKECKCTSC. A divalent metal cation-binding residues include Cys5, Cys7, Cys13, Cys15, Cys19, Cys21, Cys24, Cys26, Cys29, Cys33, Cys34, Cys36, Cys37, Cys41, Cys44, Cys48, Cys50, Cys57, Cys59, and Cys60. The interval 30-61 is alpha; it reads KKSCCSCCPMGCAKCAQGCVCKGASEKCSCCA.

This sequence belongs to the metallothionein superfamily. Type 1 family. In terms of assembly, monomer. In terms of tissue distribution, expressed in reticulocytes.

In terms of biological role, metallothioneins have a high content of cysteine residues that bind various heavy metals; these proteins are transcriptionally regulated by both heavy metals and glucocorticoids. This is Metallothionein-1L (MT1L) from Homo sapiens (Human).